The following is a 346-amino-acid chain: Sensor histidine kinase GraS (346 aa).

2 helical membrane passes run 15–35 and 43–63; these read MNWI…SLID and LFYI…LTYF. One can recognise a Histidine kinase domain in the interval 126–332; it reads EFVHDIKTPV…TVRLIFPLQN (207 aa).

As to quaternary structure, interacts with GraX.

The protein localises to the cell membrane. The catalysed reaction is ATP + protein L-histidine = ADP + protein N-phospho-L-histidine.. Member of the two-component regulatory system GraR/GraS involved in resistance against cationic antimicrobial peptides (CAMPs). Functions as a sensor protein kinase which phosphorylates GraR through the auxiliary protein GraX. In turn, GraR up-regulates many genes such as adhesins, exoproteins, transporters, toxins, and proteins involved in cell wall synthesis. Down-regulates the expression of many genes involved in RNA and amino acid synthesis or glycolysis. This is Sensor histidine kinase GraS (graS) from Staphylococcus aureus (strain COL).